The following is a 565-amino-acid chain: Periplasmic trehalase (565 aa).

The N-terminal stretch at 1-30 (MKSPAPSRPQKMALIPACIFLCFAALSVQA) is a signal peptide. Residues arginine 152, 159 to 160 (WD), asparagine 196, 205 to 207 (RSQ), 277 to 279 (RPE), and glycine 310 contribute to the substrate site. Active-site proton donor/acceptor residues include aspartate 312 and glutamate 496. Glutamate 511 contacts substrate. Residues 539-565 (CDNVPATRPLSESTTQPLKQKEAEPTP) form a disordered region.

Belongs to the glycosyl hydrolase 37 family. As to quaternary structure, monomer.

Its subcellular location is the periplasm. It catalyses the reaction alpha,alpha-trehalose + H2O = alpha-D-glucose + beta-D-glucose. Its function is as follows. Provides the cells with the ability to utilize trehalose at high osmolarity by splitting it into glucose molecules that can subsequently be taken up by the phosphotransferase-mediated uptake system. This is Periplasmic trehalase from Escherichia coli O45:K1 (strain S88 / ExPEC).